Reading from the N-terminus, the 203-residue chain is Protein shisa-like-1a (203 aa).

An N-terminal signal peptide occupies residues 1–25 (MIMNGRWSFNTLAIIFILLSTAALS). Residues 26–97 (AHFRVCEPYS…SDSFAHNNYT (72 aa)) are Extracellular-facing. 5 N-linked (GlcNAc...) asparagine glycosylation sites follow: Asn53, Asn63, Asn72, Asn83, and Asn95. The helical transmembrane segment at 98 to 118 (ALIGVWIYGFFVMVLLALDFL) threads the bilayer. The Cytoplasmic segment spans residues 119-203 (YYSAMNYELC…LLSFQTSTAW (85 aa)). The segment at 157–191 (ELNTGPGLSQQQQLHLHHHHHHHHPRHSLRGDTQS) is disordered. Residues 161–170 (GPGLSQQQQL) show a composition bias toward low complexity. The segment covering 171–184 (HLHHHHHHHHPRHS) has biased composition (basic residues).

Belongs to the shisa family.

Its subcellular location is the membrane. This chain is Protein shisa-like-1a (shisal1a), found in Danio rerio (Zebrafish).